The chain runs to 357 residues: tRNA-specific 2-thiouridylase MnmA (357 aa).

ATP contacts are provided by residues 8 to 15 (GISGGVDS) and isoleucine 34. The Nucleophile role is filled by cysteine 96. Cysteine 96 and cysteine 192 form a disulfide bridge. Glycine 120 contributes to the ATP binding site. Residues 142-144 (KDQ) are interaction with tRNA. Cysteine 192 acts as the Cysteine persulfide intermediate in catalysis. The interaction with tRNA stretch occupies residues 301–302 (RY).

The protein belongs to the MnmA/TRMU family.

It localises to the cytoplasm. The catalysed reaction is S-sulfanyl-L-cysteinyl-[protein] + uridine(34) in tRNA + AH2 + ATP = 2-thiouridine(34) in tRNA + L-cysteinyl-[protein] + A + AMP + diphosphate + H(+). In terms of biological role, catalyzes the 2-thiolation of uridine at the wobble position (U34) of tRNA, leading to the formation of s(2)U34. The sequence is that of tRNA-specific 2-thiouridylase MnmA from Chlorobium phaeobacteroides (strain DSM 266 / SMG 266 / 2430).